The primary structure comprises 186 residues: uncharacterized protein (186 aa).

The first 21 residues, 1 to 21 (MKFFLGSALFLILTFINLVRA), serve as a signal peptide directing secretion. Residues 22–142 (EFEFITPAED…AFSVNPIDKK (121 aa)) are Extracellular-facing. N-linked (GlcNAc...) asparagine glycans are attached at residues N62, N75, N93, and N104. The helical transmembrane segment at 143–163 (LAIGLSVGLSCCILIVLFLHF) threads the bilayer. Residues 164–186 (ATRRERRILKNEKELEMSSYRKH) are Cytoplasmic-facing.

The protein resides in the membrane. This is an uncharacterized protein from Schizosaccharomyces pombe (strain 972 / ATCC 24843) (Fission yeast).